The following is a 237-amino-acid chain: Concanavalin-Br (237 aa).

Residues Glu8 and Asp10 each contribute to the Mn(2+) site. Ca(2+) contacts are provided by Asp10, Tyr12, Asn14, and Asp19. Tyr12 is an a carbohydrate binding site. Mn(2+)-binding residues include Asp19, His24, and Ser34. Leu99–Tyr100 is a binding site for a carbohydrate. A Ca(2+)-binding site is contributed by Asp208. A carbohydrate is bound at residue Arg228.

Belongs to the leguminous lectin family. Homotetramer.

Functionally, glucose/D-mannose specific lectin. Has anti-inflammatory activity in rats. Induces histamine release in mast cells from hamster and rat. Induces lymphocyte proliferation and IFNG production. Shows toxicity against the aquatic snail B.glabrata at concentrations higher than 20 ug/ml. The polypeptide is Concanavalin-Br (Canavalia brasiliensis (Brazilian jack bean)).